Reading from the N-terminus, the 442-residue chain is tRNA-2-methylthio-N(6)-dimethylallyladenosine synthase (442 aa).

One can recognise an MTTase N-terminal domain in the interval 5-122; it reads KRIFIKTFGC…LPDMIESKRR (118 aa). 6 residues coordinate [4Fe-4S] cluster: Cys-14, Cys-51, Cys-85, Cys-159, Cys-163, and Cys-166. Residues 145 to 377 enclose the Radical SAM core domain; that stretch reads RVEGAAAFLS…QALNEAQGKA (233 aa). Positions 380–442 constitute a TRAM domain; that stretch reads ASMVGSIQRV…LSHTLRGELV (63 aa).

It belongs to the methylthiotransferase family. MiaB subfamily. In terms of assembly, monomer. [4Fe-4S] cluster serves as cofactor.

Its subcellular location is the cytoplasm. The catalysed reaction is N(6)-dimethylallyladenosine(37) in tRNA + (sulfur carrier)-SH + AH2 + 2 S-adenosyl-L-methionine = 2-methylsulfanyl-N(6)-dimethylallyladenosine(37) in tRNA + (sulfur carrier)-H + 5'-deoxyadenosine + L-methionine + A + S-adenosyl-L-homocysteine + 2 H(+). Its function is as follows. Catalyzes the methylthiolation of N6-(dimethylallyl)adenosine (i(6)A), leading to the formation of 2-methylthio-N6-(dimethylallyl)adenosine (ms(2)i(6)A) at position 37 in tRNAs that read codons beginning with uridine. The chain is tRNA-2-methylthio-N(6)-dimethylallyladenosine synthase from Methylobacillus flagellatus (strain ATCC 51484 / DSM 6875 / VKM B-1610 / KT).